The sequence spans 1512 residues: Bifunctional glutamate/proline--tRNA ligase (1512 aa).

Residues 164-759 are glutamate--tRNA ligase; that stretch reads GTKWDVSGNR…SSVLYSRVAV (596 aa). The 'HIGH' region motif lies at 204–214; that stretch reads PEASGYLHIGH. The segment at 294–315 is disordered; it reads TPAEQMKAEREQRTESKHRKNS. Basic and acidic residues predominate over residues 299–308; sequence MKAEREQRTE. Lys-300 carries the N6-acetyllysine; alternate modification. Residue Lys-300 is modified to N6-malonyllysine; alternate. At Thr-355 the chain carries Phosphothreonine. The residue at position 417 (Lys-417) is an N6-acetyllysine. The short motif at 432-436 is the 'KMSKS' region element; sequence VLSKR. Ser-434 is subject to Phosphoserine. An N6-acetyllysine mark is found at Lys-498, Lys-535, Lys-542, and Lys-637. Residues 709-736 are compositionally biased toward basic and acidic residues; the sequence is EMPTSGSKEKTKVEISKKETSSAPKERP. The disordered stretch occupies residues 709–742; that stretch reads EMPTSGSKEKTKVEISKKETSSAPKERPAPAVSS. The WHEP-TRS 1 domain maps to 749–805; sequence DSSVLYSRVAVQGDVVRELKAKKAPKEDIDAAVKQLLTLKAEYKEKTGQEYKPGNPS. Residues 760 to 956 form a 3 X 57 AA approximate repeats region; sequence QGDVVRELKA…GIEYKPVSAT (197 aa). At Lys-788 the chain carries N6-acetyllysine. The segment at 795–819 is disordered; sequence TGQEYKPGNPSAAAVQTVSTKSSSN. Polar residues predominate over residues 808-819; sequence AVQTVSTKSSSN. The WHEP-TRS 2 domain occupies 822–878; that stretch reads ESTSLYNKVAAQGEVVRKLKAEKAPKAKVTEAVECLLSLKAEYKEKTGKDYVPGQPP. Lys-861 is modified (N6-acetyllysine). 2 disordered regions span residues 869–898 and 956–1011; these read GKDY…GAEK and TGAE…PKKQ. Residue Tyr-872 is modified to Phosphotyrosine. A compositionally biased stretch (polar residues) spans 878–892; it reads PASQNSHSNPVSNAQ. A Phosphoserine modification is found at Ser-885. Residues 900-956 form the WHEP-TRS 3 domain; it reads EAKVLFDRVACQGEVVRKLKAEKASKDQVDSAVQELLQLKAQYKSLTGIEYKPVSAT. Over residues 958 to 976 the composition is skewed to basic and acidic residues; the sequence is AEDKDKKKKEKENKSEKQN. Positions 997–1006 are enriched in gly residues; the sequence is LSSGGAGEGQ. The residue at position 998 (Ser-998) is a Phosphoserine. Phosphoserine; by RPS6KB1 is present on Ser-999. Positions 1007–1512 are proline--tRNA ligase; that stretch reads GPKKQTRLGL…KFYTLFGRSY (506 aa). Residues 1121–1123 and Arg-1152 contribute to the L-proline site; that span reads TSE. Residues Arg-1152, Glu-1154, Arg-1163, Thr-1164, Gln-1237, and Thr-1240 each contribute to the ATP site. Arg-1152 is modified (omega-N-methylarginine). Gln-1237 lines the Mg(2+) pocket. His-1242 provides a ligand contact to L-proline. Residues Thr-1276 and Arg-1278 each coordinate ATP. Residue Ser-1350 is modified to Phosphoserine. 4 residues coordinate Zn(2+): Cys-1448, Cys-1453, Cys-1495, and Cys-1497. Lys-1503 bears the N6-acetyllysine mark.

The protein in the N-terminal section; belongs to the class-I aminoacyl-tRNA synthetase family. Glutamate--tRNA ligase type 2 subfamily. In the C-terminal section; belongs to the class-II aminoacyl-tRNA synthetase family. As to quaternary structure, homodimer. Part of the aminoacyl-tRNA synthetase multienzyme complex, also know as multisynthetase complex, that is composed of the tRNA ligases for Arg (RARS1), Asp (DARS1), Gln (QARS1), Ile (IARS1), Leu (LARS1), Lys (KARS1), Met (MARS1) the bifunctional ligase for Glu and Pro (EPRS1) and the auxiliary subunits AIMP1/p43, AIMP2/p38 and EEF1E1/p18. Forms a linear complex that contains MARS1, EEF1E1, EPRS1 and AIMP2 that is at the core of the multisubunit complex. Interacts with TARS3. Interacts with DUS2L. Component of the GAIT complex which is composed of EPRS1, RPL13A and GAPDH. Interacts (phosphorylated at Ser-999) with SLC27A1; mediates the translocation of SLC27A1 from the cytoplasm to the plasma membrane thereby increasing the uptake of long-chain fatty acids. Phosphorylated at Ser-999 by RPS6KB1; triggers EPRS1 release from the aminoacyl-tRNA synthetase multienzyme complex. In monocytes, the IFN-gamma-induced phosphorylation at Ser-999 releases EPRS1 from the aminoacyl-tRNA synthetase multienzyme complex, allowing its association with the GAIT complex. Phosphorylation at Ser-999 is specifically required for the RPL13A-mediated interaction of the GAIT complex with eIF4G. Phosphorylation at Ser-999 by RPS6KB1, is also induced by insulin through activation of the mTORC1 signaling pathway and promotes the interaction of EPRS1 with SLC27A1.

It is found in the cytoplasm. The protein localises to the cytosol. Its subcellular location is the membrane. It catalyses the reaction tRNA(Glu) + L-glutamate + ATP = L-glutamyl-tRNA(Glu) + AMP + diphosphate. The enzyme catalyses tRNA(Pro) + L-proline + ATP = L-prolyl-tRNA(Pro) + AMP + diphosphate. Its function is as follows. Multifunctional protein which primarily functions within the aminoacyl-tRNA synthetase multienzyme complex, also known as multisynthetase complex. Within the complex it catalyzes the attachment of both L-glutamate and L-proline to their cognate tRNAs in a two-step reaction where the amino acid is first activated by ATP to form a covalent intermediate with AMP. Subsequently, the activated amino acid is transferred to the acceptor end of the cognate tRNA to form L-glutamyl-tRNA(Glu) and L-prolyl-tRNA(Pro). Upon interferon-gamma stimulation, EPRS1 undergoes phosphorylation, causing its dissociation from the aminoacyl-tRNA synthetase multienzyme complex. It is recruited to form the GAIT complex, which binds to stem loop-containing GAIT elements found in the 3'-UTR of various inflammatory mRNAs, such as ceruloplasmin. The GAIT complex inhibits the translation of these mRNAs, allowing interferon-gamma to redirect the function of EPRS1 from protein synthesis to translation inhibition in specific cell contexts. Furthermore, it can function as a downstream effector in the mTORC1 signaling pathway, by promoting the translocation of SLC27A1 from the cytoplasm to the plasma membrane where it mediates the uptake of long-chain fatty acid by adipocytes. Thereby, EPRS1 also plays a role in fat metabolism and more indirectly influences lifespan. The chain is Bifunctional glutamate/proline--tRNA ligase from Mus musculus (Mouse).